The primary structure comprises 401 residues: MTPEEQVKILKRNVVDLISEEELLDRIKRKGKLRVKLGVDPSRPDLHLGHAVVLRKLREFQDLGHTVVLIIGDFTARIGDPSGRNETRPMLTKEEVLENAKTYQEQAFKILDPKRTELRFNGEWLDRMTFADVIILASKYTVARMLERDDFAKRFKEGIPIAISEFLYPLAQAYDSVAIQSDVELGGTDQLFNLLVGRKIQEEYGQEPQIVMTMPIIEGTDGKLKMSKSYGNYIAFNDPPEEMYGKLMSIPDELIIKYMRLLTDIPEERIEEYERKMKEKTINPRDVKMVLAYEITRFFHGEENAKKAQEHFVKVFQKKEIPDEMPVVEISQEKNIVDLLVEIGAASSKSEAKRLVSQGGVYIDGERIEDIKFTVEPDGERVLRVGKRKFYRISGGETKKL.

The 'HIGH' region motif lies at 41 to 50; it reads PSRPDLHLGH. The short motif at 225–229 is the 'KMSKS' region element; sequence KMSKS. K228 serves as a coordination point for ATP. One can recognise an S4 RNA-binding domain in the interval 334-395; sequence KNIVDLLVEI…GKRKFYRISG (62 aa).

This sequence belongs to the class-I aminoacyl-tRNA synthetase family. TyrS type 2 subfamily. As to quaternary structure, homodimer.

Its subcellular location is the cytoplasm. The catalysed reaction is tRNA(Tyr) + L-tyrosine + ATP = L-tyrosyl-tRNA(Tyr) + AMP + diphosphate + H(+). Functionally, catalyzes the attachment of tyrosine to tRNA(Tyr) in a two-step reaction: tyrosine is first activated by ATP to form Tyr-AMP and then transferred to the acceptor end of tRNA(Tyr). The chain is Tyrosine--tRNA ligase from Thermotoga maritima (strain ATCC 43589 / DSM 3109 / JCM 10099 / NBRC 100826 / MSB8).